Here is a 152-residue protein sequence, read N- to C-terminus: Large ribosomal subunit protein bL9 (152 aa).

This sequence belongs to the bacterial ribosomal protein bL9 family.

Binds to the 23S rRNA. The polypeptide is Large ribosomal subunit protein bL9 (Mycobacterium bovis (strain ATCC BAA-935 / AF2122/97)).